A 239-amino-acid chain; its full sequence is DNA repair protein RecO (239 aa).

This sequence belongs to the RecO family.

In terms of biological role, involved in DNA repair and RecF pathway recombination. The protein is DNA repair protein RecO of Christiangramia forsetii (strain DSM 17595 / CGMCC 1.15422 / KT0803) (Gramella forsetii).